The chain runs to 177 residues: Putative thioredoxin peroxidase (177 aa).

The 158-residue stretch at 1–158 folds into the Thioredoxin domain; it reads MFPKTLTDSK…IIRLIDAITF (158 aa). Catalysis depends on Cys45, which acts as the Cysteine sulfenic acid (-SOH) intermediate.

Belongs to the peroxiredoxin family. AhpC/Prx1 subfamily. In terms of assembly, homodimer; disulfide-linked, upon oxidation.

The enzyme catalyses a hydroperoxide + [thioredoxin]-dithiol = an alcohol + [thioredoxin]-disulfide + H2O. Its function is as follows. Thiol-specific peroxidase that catalyzes the reduction of hydrogen peroxide and organic hydroperoxides to water and alcohols, respectively. Plays a role in cell protection against oxidative stress by detoxifying peroxides and as sensor of hydrogen peroxide-mediated signaling events. This Encephalitozoon cuniculi (strain GB-M1) (Microsporidian parasite) protein is Putative thioredoxin peroxidase.